Reading from the N-terminus, the 234-residue chain is Glucosamine-6-phosphate deaminase (234 aa).

Catalysis depends on D62, which acts as the Proton acceptor; for enolization step. N128 functions as the For ring-opening step in the catalytic mechanism. The active-site Proton acceptor; for ring-opening step is H130. The For ring-opening step role is filled by E135.

The protein belongs to the glucosamine/galactosamine-6-phosphate isomerase family. NagB subfamily.

It carries out the reaction alpha-D-glucosamine 6-phosphate + H2O = beta-D-fructose 6-phosphate + NH4(+). Its pathway is amino-sugar metabolism; N-acetylneuraminate degradation; D-fructose 6-phosphate from N-acetylneuraminate: step 5/5. Functionally, catalyzes the reversible isomerization-deamination of glucosamine 6-phosphate (GlcN6P) to form fructose 6-phosphate (Fru6P) and ammonium ion. This is Glucosamine-6-phosphate deaminase from Streptococcus suis (strain 98HAH33).